The primary structure comprises 203 residues: Large ribosomal subunit protein bL25 (203 aa).

Belongs to the bacterial ribosomal protein bL25 family. CTC subfamily. As to quaternary structure, part of the 50S ribosomal subunit; part of the 5S rRNA/L5/L18/L25 subcomplex. Contacts the 5S rRNA. Binds to the 5S rRNA independently of L5 and L18.

This is one of the proteins that binds to the 5S RNA in the ribosome where it forms part of the central protuberance. The protein is Large ribosomal subunit protein bL25 of Cereibacter sphaeroides (strain ATCC 17029 / ATH 2.4.9) (Rhodobacter sphaeroides).